The following is a 321-amino-acid chain: MYRLLSVASVPLLASLVHGYADPGACSGVCTTHDPGLIRRESDGTYFLFSTGNKISYVSASSIEGPWTSVGSMLPDGSSIDLDGNDDLWAPDVSYVDGLYYVYYAVSTFGSQDSAIGLATSETMEYGSWTDHGSTGIASSSAKIYNAIDPNLIYADGTYYINFGSFWDDIYQVPMKSTPTAAASSSYNLAYDPSGTHAEEGSYMFQYGDYYYLFYSAGICCGYDTSMPASGEEYHIKVCRSTSPTGDFVDSDGTACTDGGGTMVLESHGEVYGPGGQGVYDDPNLGPVLYYHYMNTTIGYADSDAQFGWNTIDFSSGWPVV.

A signal peptide spans Met-1–Gly-19. Catalysis depends on Asp-34, which acts as the Proton acceptor. Glu-200 functions as the Proton donor in the catalytic mechanism. Residue Asn-295 is glycosylated (N-linked (GlcNAc...) asparagine).

The protein belongs to the glycosyl hydrolase 43 family.

It localises to the secreted. The enzyme catalyses Endohydrolysis of (1-&gt;5)-alpha-arabinofuranosidic linkages in (1-&gt;5)-arabinans.. It participates in glycan metabolism; L-arabinan degradation. In terms of biological role, endo-1,5-alpha-L-arabinanase involved in degradation of pectin. Its preferred substrate is linear 1,5-alpha-L-arabinan. The sequence is that of Probable arabinan endo-1,5-alpha-L-arabinosidase A (abnA) from Aspergillus niger (strain ATCC MYA-4892 / CBS 513.88 / FGSC A1513).